A 357-amino-acid polypeptide reads, in one-letter code: Peptide chain release factor 1 (357 aa).

An N5-methylglutamine modification is found at Gln232. The segment covering 282-291 (KQRAEQEAAR) has biased composition (basic and acidic residues). Positions 282–302 (KQRAEQEAARRSQVGTGDRSE) are disordered.

Belongs to the prokaryotic/mitochondrial release factor family. Post-translationally, methylated by PrmC. Methylation increases the termination efficiency of RF1.

The protein localises to the cytoplasm. Functionally, peptide chain release factor 1 directs the termination of translation in response to the peptide chain termination codons UAG and UAA. The polypeptide is Peptide chain release factor 1 (Solidesulfovibrio magneticus (strain ATCC 700980 / DSM 13731 / RS-1) (Desulfovibrio magneticus)).